Consider the following 599-residue polypeptide: MKHADPLRADTLGTAPLSQAIEAHHHGKEREAHRQSLSSVPGDTVVEAPEKVVDLEINSVDNDKEHHRAPTRDEIQTLRKVPGSIPATAYLLCFVDFAERASWFGARSVSSNFMQFPLPEGGNGAGAPPSGSELPAGALGHGQRFSVALGLVFSFLSYVIPIFGAWLAEAKVGRYRTILIGVLIGGVAHIIMIAGAVPSILQAGKGTAPFLVSLFLLALGAGLFRPNVSPTVLDQHRHYQPFVKELPSGENVIIDPEATMQRIMLIFYALINVGAFYSLATVYSEKLVGYWLAFLLPGIIYLLLPLMLWYLNDKLIKVPPDGGALTKFWKILTVSLVENKGMVWKKGFFDRVQPGALLQKYPSSGPVKWTSKDVEDVKRTLVACEIFLYFPIYHLNDGGVGTILPSQGAAMLKKGVPNDLLGNFNPITIMITVPVLTYIVYPALRKSNIKFGRISRITLGFWLAVISGLVSSLVQWRIYKTSPCGYHATTCPEVAPVSIWWQLPSYVLGALSECFSNVTGYELAYARSPPGMRSLVVSLFLFSTALSSALGLILTPAIVDPHLVWVWAGPTIALAVQTVIFWVRHRKYNDDEFMIEGDE.

Positions 23 to 34 (AHHHGKEREAHR) are enriched in basic and acidic residues. The disordered stretch occupies residues 23–42 (AHHHGKEREAHRQSLSSVPG). 8 consecutive transmembrane segments (helical) span residues 147-167 (VALG…GAWL), 178-198 (ILIG…GAVP), 204-224 (GKGT…AGLF), 263-283 (IMLI…ATVY), 291-311 (WLAF…LWYL), 386-406 (IFLY…ILPS), 424-444 (FNPI…YPAL), and 454-474 (ISRI…SSLV). N-linked (GlcNAc...) asparagine glycosylation occurs at Asn-517. Helical transmembrane passes span 539–559 (LFLF…PAIV) and 563–583 (LVWV…IFWV).

The protein belongs to the major facilitator superfamily. Proton-dependent oligopeptide transporter (POT/PTR) (TC 2.A.17) family.

Its subcellular location is the membrane. Functionally, MFS-type transporter; part of the gene cluster that mediates the biosynthesis of UCS1025A, a member of the pyrrolizidinone family that acts as a strong telomerase inhibitor and displays potent antibacterial and antitumor properties. These compounds share a hemiaminal-containing pyrrolizidinone core fused with a gamma-lactone, giving a furopyrrolizidine that is connected to a decalin fragment. The sequence is that of MFS-type transporter ucsM from Acremonium sp.